Consider the following 254-residue polypeptide: Type III pantothenate kinase 2 (254 aa).

6–13 (DMGNSHIH) is an ATP binding site. Residue 107 to 110 (GADR) participates in substrate binding. The active-site Proton acceptor is D109. D130 provides a ligand contact to K(+). Position 133 (T133) interacts with ATP. T185 is a substrate binding site.

It belongs to the type III pantothenate kinase family. Homodimer. It depends on NH4(+) as a cofactor. K(+) is required as a cofactor.

It is found in the cytoplasm. The enzyme catalyses (R)-pantothenate + ATP = (R)-4'-phosphopantothenate + ADP + H(+). Its pathway is cofactor biosynthesis; coenzyme A biosynthesis; CoA from (R)-pantothenate: step 1/5. Functionally, catalyzes the phosphorylation of pantothenate (Pan), the first step in CoA biosynthesis. The chain is Type III pantothenate kinase 2 from Francisella tularensis subsp. holarctica (strain LVS).